Here is a 337-residue protein sequence, read N- to C-terminus: Holliday junction branch migration complex subunit RuvB (337 aa).

Positions 1-20 (MQTRFVSPVNHDEEQDEPSV) are disordered. Residues 1-181 (MQTRFVSPVN…FGIILRLDLY (181 aa)) form a large ATPase domain (RuvB-L) region. Residues Arg-21, Gly-62, Lys-65, Thr-66, Thr-67, 128-130 (EDY), Arg-171, Tyr-181, and Arg-218 contribute to the ATP site. Thr-66 contacts Mg(2+). The segment at 182–252 (DPSELTVIVT…IANTALFALG (71 aa)) is small ATPAse domain (RuvB-S). The segment at 255 to 337 (QKGLDILDRR…SHTRDLTSFL (83 aa)) is head domain (RuvB-H). DNA contacts are provided by Arg-310 and Arg-315.

It belongs to the RuvB family. As to quaternary structure, homohexamer. Forms an RuvA(8)-RuvB(12)-Holliday junction (HJ) complex. HJ DNA is sandwiched between 2 RuvA tetramers; dsDNA enters through RuvA and exits via RuvB. An RuvB hexamer assembles on each DNA strand where it exits the tetramer. Each RuvB hexamer is contacted by two RuvA subunits (via domain III) on 2 adjacent RuvB subunits; this complex drives branch migration. In the full resolvosome a probable DNA-RuvA(4)-RuvB(12)-RuvC(2) complex forms which resolves the HJ.

It is found in the cytoplasm. The enzyme catalyses ATP + H2O = ADP + phosphate + H(+). The RuvA-RuvB-RuvC complex processes Holliday junction (HJ) DNA during genetic recombination and DNA repair, while the RuvA-RuvB complex plays an important role in the rescue of blocked DNA replication forks via replication fork reversal (RFR). RuvA specifically binds to HJ cruciform DNA, conferring on it an open structure. The RuvB hexamer acts as an ATP-dependent pump, pulling dsDNA into and through the RuvAB complex. RuvB forms 2 homohexamers on either side of HJ DNA bound by 1 or 2 RuvA tetramers; 4 subunits per hexamer contact DNA at a time. Coordinated motions by a converter formed by DNA-disengaged RuvB subunits stimulates ATP hydrolysis and nucleotide exchange. Immobilization of the converter enables RuvB to convert the ATP-contained energy into a lever motion, pulling 2 nucleotides of DNA out of the RuvA tetramer per ATP hydrolyzed, thus driving DNA branch migration. The RuvB motors rotate together with the DNA substrate, which together with the progressing nucleotide cycle form the mechanistic basis for DNA recombination by continuous HJ branch migration. Branch migration allows RuvC to scan DNA until it finds its consensus sequence, where it cleaves and resolves cruciform DNA. The protein is Holliday junction branch migration complex subunit RuvB of Methanospirillum hungatei JF-1 (strain ATCC 27890 / DSM 864 / NBRC 100397 / JF-1).